The following is a 591-amino-acid chain: MAPEINLPGPMSLIDNTKGQLVVNPEALKILSAITQPVVVVAIVGLYRTGKSYLMNKLAGKKNGFSLGSTVKSHTKGIWMWCVPHPKKPEHTLVLLDTEGLGDIEKGDNENDSWIFALAILLSSTFVYNSMGTINQQAMDQLHYVTELTDRIKANSSPGNNSVDDSADFVSFFPAFVWTLRDFTLELEVDGEPITADDYLELSLKLRKGTDKKSKSFNDPRLCIRKFFPKRKCFVFDWPAPKKYLAHLEQLKEEELNPDFIEQVAEFCSYILSHSNVKTLSGGIPVNGPRLESLVLTYVNAISSGDLPCMENAVLALAQIENSAAVEKAIAHYEQQMGQKVQLPTETLQELLDLHRDSEREAIEVFMKNSFKDVDQMFQRKLGAQLEARRDDFCKQNSKASSDCCMALLQDIFGPLEEDVKQGTFSKPGGYRLFTQKLQELKNKYYQVPRKGIQAKEVLKKYLESKEDVADALLQTDQSLSEKEKAIEVERIKAESAEAAKKMLEEIQKKNEEMMEQKEKSYQEHVKQLTEKMERDRAQLMAEQEKTLALKLQEQERLLKEGFENESKRLQKDIWDIQMRSKSLEPICNIL.

Positions 1-309 are GTPase domain (Globular); it reads MAPEINLPGP…NAISSGDLPC (309 aa). The region spanning 35–276 is the GB1/RHD3-type G domain; it reads TQPVVVVAIV…FCSYILSHSN (242 aa). GTP-binding positions include 45–52, 181–182, and Leu245; these read GLYRTGKS and RD. Residue Cys588 is modified to Cysteine methyl ester. Residue Cys588 is the site of S-geranylgeranyl cysteine attachment. Residues 589–591 constitute a propeptide, removed in mature form; it reads NIL.

The protein belongs to the TRAFAC class dynamin-like GTPase superfamily. GB1/RHD3 GTPase family. GB1 subfamily. In terms of assembly, homodimer; homodimerization occurs upon GTP-binding and is required for the association with membranous structures. Heterodimer with other family members, including GBP1, GBP3, GBP4 and GBP5. (Microbial infection) Ubiquitinated by S.flexneri IpaH9.8, leading to its degradation by the proteasome, thereby preventing its ability to promote host defense against bacterial infection. In terms of processing, isoprenylation is required for proper subcellular location.

Its subcellular location is the cytoplasmic vesicle membrane. It is found in the golgi apparatus membrane. The protein localises to the cytoplasm. It localises to the perinuclear region. The catalysed reaction is GTP + H2O = GDP + phosphate + H(+). Interferon (IFN)-inducible GTPase that plays important roles in innate immunity against a diverse range of bacterial, viral and protozoan pathogens. Hydrolyzes GTP to GMP in 2 consecutive cleavage reactions, but the major reaction product is GDP. Following infection, recruited to the pathogen-containing vacuoles or vacuole-escaped bacteria and acts as a positive regulator of inflammasome assembly by promoting the release of inflammasome ligands from bacteria. Acts by promoting lysis of pathogen-containing vacuoles, releasing pathogens into the cytosol. Following pathogen release in the cytosol, promotes recruitment of proteins that mediate bacterial cytolysis: this liberates ligands that are detected by inflammasomes, such as lipopolysaccharide (LPS) that activates the non-canonical CASP4/CASP11 inflammasome or double-stranded DNA (dsDNA) that activates the AIM2 inflammasome. Confers protection to the protozoan pathogen Toxoplasma gondii. Independently of its GTPase activity, acts as an inhibitor of various viruses infectivity, such as HIV-1, Zika and influenza A viruses, by inhibiting FURIN-mediated maturation of viral envelope proteins. This is Guanylate-binding protein 2 from Homo sapiens (Human).